Reading from the N-terminus, the 694-residue chain is Elongation factor G (694 aa).

A tr-type G domain is found at 9–288 (DAIRNIGIMA…VIVKWLPSPL (280 aa)). GTP is bound by residues 18-25 (AHIDAGKT), 82-86 (DTPGH), and 136-139 (NKMD).

It belongs to the TRAFAC class translation factor GTPase superfamily. Classic translation factor GTPase family. EF-G/EF-2 subfamily.

It is found in the cytoplasm. In terms of biological role, catalyzes the GTP-dependent ribosomal translocation step during translation elongation. During this step, the ribosome changes from the pre-translocational (PRE) to the post-translocational (POST) state as the newly formed A-site-bound peptidyl-tRNA and P-site-bound deacylated tRNA move to the P and E sites, respectively. Catalyzes the coordinated movement of the two tRNA molecules, the mRNA and conformational changes in the ribosome. This is Elongation factor G from Chlamydia trachomatis serovar L2b (strain UCH-1/proctitis).